The following is a 133-amino-acid chain: Holo-[acyl-carrier-protein] synthase (133 aa).

Aspartate 8 and glutamate 57 together coordinate Mg(2+).

Belongs to the P-Pant transferase superfamily. AcpS family. Mg(2+) serves as cofactor.

It localises to the cytoplasm. The catalysed reaction is apo-[ACP] + CoA = holo-[ACP] + adenosine 3',5'-bisphosphate + H(+). Its function is as follows. Transfers the 4'-phosphopantetheine moiety from coenzyme A to a Ser of acyl-carrier-protein. This is Holo-[acyl-carrier-protein] synthase from Chelativorans sp. (strain BNC1).